We begin with the raw amino-acid sequence, 244 residues long: DNA polymerase sliding clamp (244 aa).

This sequence belongs to the PCNA family. Homotrimer. The subunits circularize to form a toroid; DNA passes through its center. Replication factor C (RFC) is required to load the toroid on the DNA.

Its function is as follows. Sliding clamp subunit that acts as a moving platform for DNA processing. Responsible for tethering the catalytic subunit of DNA polymerase and other proteins to DNA during high-speed replication. This Methanobrevibacter smithii (strain ATCC 35061 / DSM 861 / OCM 144 / PS) protein is DNA polymerase sliding clamp.